Consider the following 213-residue polypeptide: Dimethyl sulfoxide reductase transcriptional activator (213 aa).

The HTH bat-type domain maps to 155-206 (LTAKQREAALIAVHHGYYETPRRTELATLAEALGISKSALSQRLNAVEAKLA).

Involved in activating dmsEABCD gene expression related to dimethyl sulfoxide (DMSO) reductase. Required for anaerobic respiration on dimethyl sulfoxide (DMSO). The protein is Dimethyl sulfoxide reductase transcriptional activator of Haloferax volcanii (strain ATCC 29605 / DSM 3757 / JCM 8879 / NBRC 14742 / NCIMB 2012 / VKM B-1768 / DS2) (Halobacterium volcanii).